A 251-amino-acid polypeptide reads, in one-letter code: Pyrroloquinoline-quinone synthase (251 aa).

It belongs to the PqqC family.

It carries out the reaction 6-(2-amino-2-carboxyethyl)-7,8-dioxo-1,2,3,4,7,8-hexahydroquinoline-2,4-dicarboxylate + 3 O2 = pyrroloquinoline quinone + 2 H2O2 + 2 H2O + H(+). It participates in cofactor biosynthesis; pyrroloquinoline quinone biosynthesis. In terms of biological role, ring cyclization and eight-electron oxidation of 3a-(2-amino-2-carboxyethyl)-4,5-dioxo-4,5,6,7,8,9-hexahydroquinoline-7,9-dicarboxylic-acid to PQQ. The chain is Pyrroloquinoline-quinone synthase from Pseudomonas syringae pv. tomato (strain ATCC BAA-871 / DC3000).